The chain runs to 337 residues: uncharacterized protein (337 aa).

Residues 291–314 (NKTRQCSNTKTTTKSTMTPINNGF) form a disordered region. Over residues 299–308 (TKTTTKSTMT) the composition is skewed to low complexity.

This is an uncharacterized protein from Acanthamoeba polyphaga mimivirus (APMV).